Reading from the N-terminus, the 354-residue chain is Ferrochelatase (354 aa).

Residues histidine 214 and glutamate 295 each coordinate Fe cation.

It belongs to the ferrochelatase family.

It localises to the cytoplasm. It catalyses the reaction heme b + 2 H(+) = protoporphyrin IX + Fe(2+). The protein operates within porphyrin-containing compound metabolism; protoheme biosynthesis; protoheme from protoporphyrin-IX: step 1/1. In terms of biological role, catalyzes the ferrous insertion into protoporphyrin IX. This is Ferrochelatase from Burkholderia ambifaria (strain ATCC BAA-244 / DSM 16087 / CCUG 44356 / LMG 19182 / AMMD) (Burkholderia cepacia (strain AMMD)).